Consider the following 222-residue polypeptide: MKSINILSFLLLSSTLSLVAFARSFTSENPIVLPTTCHDDDNLVLPEVYDQDGNPLRIGERYIINNPLLGAGAVYLYNIGNLQCPNAVLQHMSIPQFLGEGTPVVFVRKSESDYGDVVRVMTVVYIKFFVKTTKLCVDQTVWKVNDEQLVVTGGKVGNENDIFKIMKTDLVTPGGSKYVYKLLHCPSHLGCKNIGGNFKNGYPRLVTVDDDKDFIPFVFIKA.

A signal peptide spans 1-26 (MKSINILSFLLLSSTLSLVAFARSFT). Residues 27–42 (SENPIVLPTTCHDDDN) constitute a propeptide that is removed on maturation. A Vacuolar targeting signal motif is present at residues 29-34 (NPIVLP). Intrachain disulfides connect C84/C136 and C185/C191.

Belongs to the protease inhibitor I3 (leguminous Kunitz-type inhibitor) family. Tubers, leaves.

It localises to the vacuole. In terms of biological role, potent inhibitor of cathepsin l (cysteine protease). Does not inhibit trypsin or chymotrypsin (serine proteases). May protect the plant by inhibiting proteases of invading organisms. This chain is Cysteine protease inhibitor 1, found in Solanum tuberosum (Potato).